Here is a 225-residue protein sequence, read N- to C-terminus: ATP synthase F(0) complex subunit a (225 aa).

The next 6 membrane-spanning stretches (helical) occupy residues 10–30, 69–89, 96–116, 135–155, 168–188, and 194–214; these read PSLLGISLLMPALLMTTILLL, LILISLLILLSLTNLLGLLPY, QLSMNMAIALPLWLVTVLIGL, LLIPILILIETISLLIRPIAL, LLIQLISIATLNLWFMMPPLS, and VLILLLLLEFAVAMIQAYVFV.

Belongs to the ATPase A chain family. As to quaternary structure, component of the ATP synthase complex composed at least of ATP5F1A/subunit alpha, ATP5F1B/subunit beta, ATP5MC1/subunit c (homooctomer), MT-ATP6/subunit a, MT-ATP8/subunit 8, ATP5ME/subunit e, ATP5MF/subunit f, ATP5MG/subunit g, ATP5MK/subunit k, ATP5MJ/subunit j, ATP5F1C/subunit gamma, ATP5F1D/subunit delta, ATP5F1E/subunit epsilon, ATP5PF/subunit F6, ATP5PB/subunit b, ATP5PD/subunit d, ATP5PO/subunit OSCP. ATP synthase complex consists of a soluble F(1) head domain (subunits alpha(3) and beta(3)) - the catalytic core - and a membrane F(0) domain - the membrane proton channel (subunits c, a, 8, e, f, g, k and j). These two domains are linked by a central stalk (subunits gamma, delta, and epsilon) rotating inside the F1 region and a stationary peripheral stalk (subunits F6, b, d, and OSCP). Interacts with DNAJC30; interaction is direct.

Its subcellular location is the mitochondrion inner membrane. The enzyme catalyses H(+)(in) = H(+)(out). Subunit a, of the mitochondrial membrane ATP synthase complex (F(1)F(0) ATP synthase or Complex V) that produces ATP from ADP in the presence of a proton gradient across the membrane which is generated by electron transport complexes of the respiratory chain. ATP synthase complex consist of a soluble F(1) head domain - the catalytic core - and a membrane F(1) domain - the membrane proton channel. These two domains are linked by a central stalk rotating inside the F(1) region and a stationary peripheral stalk. During catalysis, ATP synthesis in the catalytic domain of F(1) is coupled via a rotary mechanism of the central stalk subunits to proton translocation. With the subunit c (ATP5MC1), forms the proton-conducting channel in the F(0) domain, that contains two crucial half-channels (inlet and outlet) that facilitate proton movement from the mitochondrial intermembrane space (IMS) into the matrix. Protons are taken up via the inlet half-channel and released through the outlet half-channel, following a Grotthuss mechanism. This Alligator mississippiensis (American alligator) protein is ATP synthase F(0) complex subunit a.